The following is a 261-amino-acid chain: Anamorsin homolog (261 aa).

Residues Val-4 to Leu-134 are N-terminal SAM-like domain. A linker region spans residues Leu-134–Val-173. 4 residues coordinate [2Fe-2S] cluster: Cys-183, Cys-192, Cys-195, and Cys-197. The tract at residues Cys-183–Cys-197 is fe-S binding site A. Residues Cys-222, Cys-225, Cys-233, and Cys-236 each coordinate [4Fe-4S] cluster. Short sequence motifs (cx2C motif) lie at residues Cys-222–Cys-225 and Cys-233–Cys-236. The fe-S binding site B stretch occupies residues Cys-222 to Cys-236.

It belongs to the anamorsin family. Monomer. Requires [2Fe-2S] cluster as cofactor. It depends on [4Fe-4S] cluster as a cofactor.

It localises to the cytoplasm. Its subcellular location is the mitochondrion intermembrane space. Functionally, component of the cytosolic iron-sulfur (Fe-S) protein assembly (CIA) machinery. Required for the maturation of extramitochondrial Fe-S proteins. Part of an electron transfer chain functioning in an early step of cytosolic Fe-S biogenesis, facilitating the de novo assembly of a [4Fe-4S] cluster on the cytosolic Fe-S scaffold complex. Electrons are transferred from NADPH via a FAD- and FMN-containing diflavin oxidoreductase. Together with the diflavin oxidoreductase, also required for the assembly of the diferric tyrosyl radical cofactor of ribonucleotide reductase (RNR), probably by providing electrons for reduction during radical cofactor maturation in the catalytic small subunit. The protein is Anamorsin homolog of Culex quinquefasciatus (Southern house mosquito).